A 127-amino-acid chain; its full sequence is MVELNFEKSVDGLLPAVVQDYVSGEVLMLAYINKLSWEKTLETGQAHYWSRSRNSLWLKGESSGNVQVIHDILVDCDSDTVVFKVDQIGDAACHTGHRSCFFRRVHQGELVVEGKPLFDPAQVYGSK.

A Mg(2+)-binding site is contributed by D75. A Zn(2+)-binding site is contributed by C76. Residues D77 and D79 each coordinate Mg(2+). Residues C93 and C100 each coordinate Zn(2+).

The protein belongs to the PRA-CH family. Homodimer. Requires Mg(2+) as cofactor. It depends on Zn(2+) as a cofactor.

The protein localises to the cytoplasm. The enzyme catalyses 1-(5-phospho-beta-D-ribosyl)-5'-AMP + H2O = 1-(5-phospho-beta-D-ribosyl)-5-[(5-phospho-beta-D-ribosylamino)methylideneamino]imidazole-4-carboxamide. The protein operates within amino-acid biosynthesis; L-histidine biosynthesis; L-histidine from 5-phospho-alpha-D-ribose 1-diphosphate: step 3/9. Its function is as follows. Catalyzes the hydrolysis of the adenine ring of phosphoribosyl-AMP. This chain is Phosphoribosyl-AMP cyclohydrolase, found in Desulfotalea psychrophila (strain LSv54 / DSM 12343).